We begin with the raw amino-acid sequence, 602 residues long: Cholinesterase (602 aa).

The signal sequence occupies residues 1–28; sequence MQSKGTIISIQFLLRFLLLWVLIGKSHT. N-linked (GlcNAc...) asparagine glycosylation is present at Asn-85. Cys-93 and Cys-120 are disulfide-bonded. An N-linked (GlcNAc...) asparagine glycan is attached at Asn-134. Residue 144-145 coordinates substrate; the sequence is GG. The active-site Acyl-ester intermediate is Ser-226. Position 226 is a phosphoserine (Ser-226). Asn-269 and Asn-284 each carry an N-linked (GlcNAc...) asparagine glycan. A disulfide bond links Cys-280 and Cys-291. Glu-353 (charge relay system) is an active-site residue. N-linked (GlcNAc...) asparagine glycosylation is present at Asn-369. An intrachain disulfide couples Cys-428 to Cys-547. The Charge relay system role is filled by His-466. 4 N-linked (GlcNAc...) asparagine glycosylation sites follow: Asn-483, Asn-509, Asn-513, and Asn-514.

The protein belongs to the type-B carboxylesterase/lipase family. Homotetramer; disulfide-linked. Dimer of dimers.

Its subcellular location is the secreted. The enzyme catalyses an acylcholine + H2O = a carboxylate + choline + H(+). Esterase with broad substrate specificity. Contributes to the inactivation of the neurotransmitter acetylcholine. Can degrade neurotoxic organophosphate esters. In Felis catus (Cat), this protein is Cholinesterase (BCHE).